Consider the following 85-residue polypeptide: uncharacterized protein (85 aa).

Belongs to the ycf76 family.

It localises to the plastid. The protein localises to the chloroplast. This is an uncharacterized protein from Saccharum hybrid (Sugarcane).